A 62-amino-acid chain; its full sequence is Histone H1.2, embryonic (62 aa).

An H15 domain is found at 1–53 (HVVAAITALKERGGSSMKKQSVFIKKALKSGVEKGTLVQVKGKGASGSFKLGK).

Belongs to the histone H1/H5 family.

It is found in the nucleus. The protein resides in the chromosome. Functionally, histones H1 are necessary for the condensation of nucleosome chains into higher-order structures. The polypeptide is Histone H1.2, embryonic (Parechinus angulosus (Angulate sea urchin)).